Consider the following 276-residue polypeptide: NAD-capped RNA hydrolase NudC (276 aa).

R82 contacts substrate. Zn(2+)-binding residues include C112 and C115. E125 serves as a coordination point for substrate. C130 and C133 together coordinate Zn(2+). Residue Y138 participates in substrate binding. A Nudix hydrolase domain is found at 139-262 (PRISPSMIVL…SIARYLIDVY (124 aa)). The a divalent metal cation site is built by A172, E188, and E192. The Nudix box motif lies at 173–194 (GFAEPGESAEDCLIREVREEVQ). 206-213 (QCWPFPHS) is a substrate binding site. E233 contacts a divalent metal cation. A255 contacts substrate.

The protein belongs to the Nudix hydrolase family. NudC subfamily. In terms of assembly, homodimer. The cofactor is Mg(2+). Requires Mn(2+) as cofactor. Zn(2+) serves as cofactor.

The catalysed reaction is a 5'-end NAD(+)-phospho-ribonucleoside in mRNA + H2O = a 5'-end phospho-adenosine-phospho-ribonucleoside in mRNA + beta-nicotinamide D-ribonucleotide + 2 H(+). The enzyme catalyses NAD(+) + H2O = beta-nicotinamide D-ribonucleotide + AMP + 2 H(+). It carries out the reaction NADH + H2O = reduced beta-nicotinamide D-ribonucleotide + AMP + 2 H(+). In terms of biological role, mRNA decapping enzyme that specifically removes the nicotinamide adenine dinucleotide (NAD) cap from a subset of mRNAs by hydrolyzing the diphosphate linkage to produce nicotinamide mononucleotide (NMN) and 5' monophosphate mRNA. The NAD-cap is present at the 5'-end of some mRNAs and stabilizes RNA against 5'-processing. Has preference for mRNAs with a 5'-end purine. Catalyzes the hydrolysis of a broad range of dinucleotide pyrophosphates. This chain is NAD-capped RNA hydrolase NudC, found in Pseudomonas fluorescens (strain Pf0-1).